We begin with the raw amino-acid sequence, 381 residues long: Chorismate synthase (381 aa).

The NADP(+) site is built by Arg41 and Arg47. FMN contacts are provided by residues 127 to 129, 247 to 248, Gly291, 306 to 310, and Arg332; these read RAS, QA, and KPIPT.

It belongs to the chorismate synthase family. Homotetramer. FMNH2 serves as cofactor.

It catalyses the reaction 5-O-(1-carboxyvinyl)-3-phosphoshikimate = chorismate + phosphate. It functions in the pathway metabolic intermediate biosynthesis; chorismate biosynthesis; chorismate from D-erythrose 4-phosphate and phosphoenolpyruvate: step 7/7. Catalyzes the anti-1,4-elimination of the C-3 phosphate and the C-6 proR hydrogen from 5-enolpyruvylshikimate-3-phosphate (EPSP) to yield chorismate, which is the branch point compound that serves as the starting substrate for the three terminal pathways of aromatic amino acid biosynthesis. This reaction introduces a second double bond into the aromatic ring system. This is Chorismate synthase from Anaeromyxobacter dehalogenans (strain 2CP-C).